The sequence spans 305 residues: Ribosomal RNA small subunit methyltransferase H (305 aa).

S-adenosyl-L-methionine contacts are provided by residues 47-49 (GGH), Asp-66, Phe-93, Asp-108, and Gln-115. The tract at residues 280–305 (ASAEEQERNPRSRSAKLRIARKRSES) is disordered. Over residues 290–305 (RSRSAKLRIARKRSES) the composition is skewed to basic residues.

It belongs to the methyltransferase superfamily. RsmH family.

It is found in the cytoplasm. The enzyme catalyses cytidine(1402) in 16S rRNA + S-adenosyl-L-methionine = N(4)-methylcytidine(1402) in 16S rRNA + S-adenosyl-L-homocysteine + H(+). Specifically methylates the N4 position of cytidine in position 1402 (C1402) of 16S rRNA. The chain is Ribosomal RNA small subunit methyltransferase H from Synechococcus sp. (strain WH7803).